A 476-amino-acid chain; its full sequence is Aspartyl/glutamyl-tRNA(Asn/Gln) amidotransferase subunit B (476 aa).

This sequence belongs to the GatB/GatE family. GatB subfamily. Heterotrimer of A, B and C subunits.

It catalyses the reaction L-glutamyl-tRNA(Gln) + L-glutamine + ATP + H2O = L-glutaminyl-tRNA(Gln) + L-glutamate + ADP + phosphate + H(+). The enzyme catalyses L-aspartyl-tRNA(Asn) + L-glutamine + ATP + H2O = L-asparaginyl-tRNA(Asn) + L-glutamate + ADP + phosphate + 2 H(+). Allows the formation of correctly charged Asn-tRNA(Asn) or Gln-tRNA(Gln) through the transamidation of misacylated Asp-tRNA(Asn) or Glu-tRNA(Gln) in organisms which lack either or both of asparaginyl-tRNA or glutaminyl-tRNA synthetases. The reaction takes place in the presence of glutamine and ATP through an activated phospho-Asp-tRNA(Asn) or phospho-Glu-tRNA(Gln). The protein is Aspartyl/glutamyl-tRNA(Asn/Gln) amidotransferase subunit B of Listeria welshimeri serovar 6b (strain ATCC 35897 / DSM 20650 / CCUG 15529 / CIP 8149 / NCTC 11857 / SLCC 5334 / V8).